The chain runs to 662 residues: Pollen receptor-like kinase 1 (662 aa).

The first 31 residues, 1–31, serve as a signal peptide directing secretion; it reads MPPMQARTLSVYNVMVPLVCLLLFFSTPTHG. Residues 32–256 are Extracellular-facing; that stretch reads LSDSEAILKF…ARPKSSSRGP (225 aa). LRR repeat units follow at residues 79-98, 99-121, 122-144, 147-169, 171-191, and 192-214; these read QMEN…SGLT, SLRT…KKLA, ALKS…AFEG, WLKK…VAKL, KLLE…EFEH, and QLHL…LSMT. An N-linked (GlcNAc...) asparagine glycan is attached at asparagine 197. The disordered stretch occupies residues 233–253; it reads ECDSPYIEHPPQSEARPKSSS. A helical membrane pass occupies residues 257 to 277; that stretch reads LVITAIVAALTILIILGVIFL. At 278–662 the chain is on the cytoplasmic side; that stretch reads LNRSYKNKKP…GESCESISFA (385 aa). The segment at 288–330 is disordered; sequence RLAVETGPSSLQKKTGIREADQSRRDRKKADHRKGSGTTKRMG. The Protein kinase domain occupies 357 to 639; it reads KASAEILGSG…EREGDDDDFY (283 aa). At serine 359 the chain carries Phosphoserine. ATP is bound by residues 363 to 371 and lysine 385; that span reads LGSGCFGAS. Serine 437 bears the Phosphoserine mark. Threonine 457 carries the phosphothreonine modification. Tyrosine 527 is subject to Phosphotyrosine. The segment at 636 to 662 is disordered; the sequence is DDFYSTYVSETDGRSSKGESCESISFA. The span at 646-655 shows a compositional bias: basic and acidic residues; sequence TDGRSSKGES.

It belongs to the protein kinase superfamily. Ser/Thr protein kinase family. In terms of assembly, interacts in vitro with ROPGEF1 (via PRONE domain). In terms of tissue distribution, expressed in pollen and/or in flowers, but not in leaves.

The protein localises to the cell membrane. It carries out the reaction L-seryl-[protein] + ATP = O-phospho-L-seryl-[protein] + ADP + H(+). It catalyses the reaction L-threonyl-[protein] + ATP = O-phospho-L-threonyl-[protein] + ADP + H(+). Its function is as follows. Receptor-like kinase involved in the control of pollen germination and pollen tube polar growth. This is Pollen receptor-like kinase 1 from Arabidopsis thaliana (Mouse-ear cress).